The primary structure comprises 334 residues: Coiled-coil domain-containing protein 89 (334 aa).

The stretch at 75–318 (EAAQRFQSER…EAYKKHSGDL (244 aa)) forms a coiled coil.

It belongs to the CCDC89 family. In terms of assembly, interacts (via C-terminus) with hey1/bc8 (via Orange domain). As to expression, in adults, expressed at varying levels in different organs including the liver and brain, with highest expression in the testis.

The protein localises to the cytoplasm. The protein resides in the nucleus. The polypeptide is Coiled-coil domain-containing protein 89 (Xenopus laevis (African clawed frog)).